Consider the following 408-residue polypeptide: Acetate kinase (408 aa).

Asn10 contacts Mg(2+). Lys17 contributes to the ATP binding site. Arg96 provides a ligand contact to substrate. Residue Asp153 is the Proton donor/acceptor of the active site. ATP-binding positions include His213–Gly217 and Asp288–Arg290. Glu393 provides a ligand contact to Mg(2+).

Belongs to the acetokinase family. As to quaternary structure, homodimer. Mg(2+) is required as a cofactor. It depends on Mn(2+) as a cofactor.

The protein localises to the cytoplasm. The enzyme catalyses acetate + ATP = acetyl phosphate + ADP. The protein operates within metabolic intermediate biosynthesis; acetyl-CoA biosynthesis; acetyl-CoA from acetate: step 1/2. In terms of biological role, catalyzes the formation of acetyl phosphate from acetate and ATP. Can also catalyze the reverse reaction. The polypeptide is Acetate kinase (Borrelia recurrentis (strain A1)).